We begin with the raw amino-acid sequence, 650 residues long: Threonine--tRNA ligase (650 aa).

One can recognise a TGS domain in the interval 3 to 65; it reads DLVKVTLPDG…DRDARLEIVT (63 aa). Residues 248–548 form a catalytic region; sequence DHRRLGPQLG…LTEHYAGAFP (301 aa). Zn(2+)-binding residues include Cys-349, His-400, and His-525.

This sequence belongs to the class-II aminoacyl-tRNA synthetase family. As to quaternary structure, homodimer. It depends on Zn(2+) as a cofactor.

The protein localises to the cytoplasm. The enzyme catalyses tRNA(Thr) + L-threonine + ATP = L-threonyl-tRNA(Thr) + AMP + diphosphate + H(+). Its function is as follows. Catalyzes the attachment of threonine to tRNA(Thr) in a two-step reaction: L-threonine is first activated by ATP to form Thr-AMP and then transferred to the acceptor end of tRNA(Thr). Also edits incorrectly charged L-seryl-tRNA(Thr). This is Threonine--tRNA ligase from Anaeromyxobacter dehalogenans (strain 2CP-C).